The primary structure comprises 588 residues: Glutamyl-tRNA(Gln) amidotransferase subunit B, mitochondrial (588 aa).

The transit peptide at 1-109 (MLRSWIGSGT…RAPTSTSETP (109 aa)) directs the protein to the mitochondrion. The segment covering 22 to 35 (SSLPSPKASFSSAP) has biased composition (low complexity). The tract at residues 22–50 (SSLPSPKASFSSAPNRYLQPPTSADRVPL) is disordered.

This sequence belongs to the GatB/GatE family. GatB subfamily. Subunit of the heterotrimeric GatCAB amidotransferase (AdT) complex, composed of A, B and C subunits.

The protein localises to the mitochondrion. The catalysed reaction is L-glutamyl-tRNA(Gln) + L-glutamine + ATP + H2O = L-glutaminyl-tRNA(Gln) + L-glutamate + ADP + phosphate + H(+). Allows the formation of correctly charged Gln-tRNA(Gln) through the transamidation of misacylated Glu-tRNA(Gln) in the mitochondria. The reaction takes place in the presence of glutamine and ATP through an activated gamma-phospho-Glu-tRNA(Gln). The protein is Glutamyl-tRNA(Gln) amidotransferase subunit B, mitochondrial of Penicillium rubens (strain ATCC 28089 / DSM 1075 / NRRL 1951 / Wisconsin 54-1255) (Penicillium chrysogenum).